A 263-amino-acid polypeptide reads, in one-letter code: MKRIGLKVAYDGTDFAGYQIQPNERTVQGELESVLKNIHKGMSIRVTASGRTDTGVHARGQIVHFDTSLSFPVDRWPIALNSQLPADICVLEAADVPADFHARYSAKTKEYRYRVLTSAQADVFRRNYTYHVRYPLDVEAMQRAAVQLLGTHDFSSFCAAKAEVEDKVRTIEDVALWREGDELIFSIRGNGFLYNMVRIIVGTLLEIGAGKRSAEEVAKILAARSREAAGKTAPGHGLISGRSNMTNGKLENNKTTNPCVTKY.

The active-site Nucleophile is Asp-53. Position 111 (Tyr-111) interacts with substrate. The interval 232–263 (TAPGHGLISGRSNMTNGKLENNKTTNPCVTKY) is disordered. Residues 241–263 (GRSNMTNGKLENNKTTNPCVTKY) show a composition bias toward polar residues.

The protein belongs to the tRNA pseudouridine synthase TruA family. Homodimer.

The catalysed reaction is uridine(38/39/40) in tRNA = pseudouridine(38/39/40) in tRNA. In terms of biological role, formation of pseudouridine at positions 38, 39 and 40 in the anticodon stem and loop of transfer RNAs. The chain is tRNA pseudouridine synthase A from Halalkalibacterium halodurans (strain ATCC BAA-125 / DSM 18197 / FERM 7344 / JCM 9153 / C-125) (Bacillus halodurans).